The sequence spans 700 residues: Dymeclin (700 aa).

The N-myristoyl glycine moiety is linked to residue Gly2. Position 347 is a phosphoserine (Ser347).

Belongs to the dymeclin family.

The chain is Dymeclin from Drosophila pseudoobscura pseudoobscura (Fruit fly).